The chain runs to 61 residues: Large ribosomal subunit protein bL28 (61 aa).

The segment at 1–24 is disordered; the sequence is MAKDYVTGKKTTFGNKRSHSLNPT. Residues 9–23 show a composition bias toward polar residues; sequence KKTTFGNKRSHSLNP.

It belongs to the bacterial ribosomal protein bL28 family.

The protein is Large ribosomal subunit protein bL28 of Lactobacillus acidophilus (strain ATCC 700396 / NCK56 / N2 / NCFM).